The chain runs to 673 residues: G-protein-signaling modulator 1 (673 aa).

The segment at 1 to 507 is mediates association with membranes; sequence MASPAPPAAE…DLLSKFQSSR (507 aa). TPR repeat units follow at residues 28–61, 66–99, 106–139, 146–178, 180–199, 206–239, 246–279, 286–319, and 326–359; these read CLEL…GTED, SAIY…ARTI, AKAS…AQEQ, ARAL…PPDV, ETLH…VKEL, GRAY…AKEF, RRAY…SRQI, AQAC…AQEL, and GRAC…SQEI. The interval 361 to 485 is interaction with STK11/LKB1; it reads DRNGELTARM…VRVQVPRTGI (125 aa). Residue S410 is modified to Phosphoserine. R418 is subject to Omega-N-methylarginine. The span at 420-439 shows a compositional bias: basic and acidic residues; that stretch reads PLDREQNGETHHTGDWRGPS. The disordered stretch occupies residues 420–477; that stretch reads PLDREQNGETHHTGDWRGPSRDSLPLPMRSRKYQEGPDAIERRPREGSHSPLDSADVR. S442, S467, S469, S490, and S491 each carry phosphoserine. The span at 451-467 shows a compositional bias: basic and acidic residues; the sequence is KYQEGPDAIERRPREGS. Residues 493-515 form the GoLoco 1 domain; it reads EECFFDLLSKFQSSRMDDQRCPL. The disordered stretch occupies residues 510–544; it reads DQRCPLEEGQAGAAEATAAPTLEERAAQPSVTASP. Positions 516–530 are enriched in low complexity; the sequence is EEGQAGAAEATAAPT. A phosphoserine mark is found at S543 and S567. GoLoco domains are found at residues 546 to 568, 594 to 616, and 628 to 650; these read TEEF…RASV, GDEF…RCPP, and DEDF…RVDL. Disordered regions lie at residues 609–628 and 645–673; these read IDDQ…TMPD and EQRV…PGAS. Position 653 is a phosphoserine (S653).

It belongs to the GPSM family. As to quaternary structure, interacts with INSC/inscuteable and FRMPD1. Interacts with GNAI1, GNAI2 and GNAI3 preferentially in their GDP-bound state. May also interact with GNAO1. Interacts with STK11/LKB1 and MACF1. Post-translationally, phosphorylation regulates interaction with G(i/o) alpha. Isoform 4 is specifically expressed in brain by neurons and also detected in testis, liver, kidney, heart and pancreas (at protein level). Highly expressed in cerebellum and subventricular zone-olfactory bulb system. Isoform 2 and isoform 3 are specifically expressed in heart and are also detected in brain.

It is found in the endoplasmic reticulum membrane. It localises to the golgi apparatus membrane. Its subcellular location is the cell membrane. The protein resides in the cytoplasm. The protein localises to the cytosol. Guanine nucleotide dissociation inhibitor (GDI) which functions as a receptor-independent activator of heterotrimeric G-protein signaling. Keeps G(i/o) alpha subunit in its GDP-bound form thus uncoupling heterotrimeric G-proteins signaling from G protein-coupled receptors. Controls spindle orientation and asymmetric cell fate of cerebral cortical progenitors. May also be involved in macroautophagy in intestinal cells. May play a role in drug addiction. The protein is G-protein-signaling modulator 1 (Gpsm1) of Rattus norvegicus (Rat).